A 129-amino-acid polypeptide reads, in one-letter code: Small ribosomal subunit protein uS12 (129 aa).

A 3-methylthioaspartic acid modification is found at aspartate 89. Residues 101–129 (TLDTSGVSDRKQSRSKYGAKQPKAVAAKK) are disordered.

The protein belongs to the universal ribosomal protein uS12 family. As to quaternary structure, part of the 30S ribosomal subunit. Contacts proteins S8 and S17. May interact with IF1 in the 30S initiation complex.

Its function is as follows. With S4 and S5 plays an important role in translational accuracy. Functionally, interacts with and stabilizes bases of the 16S rRNA that are involved in tRNA selection in the A site and with the mRNA backbone. Located at the interface of the 30S and 50S subunits, it traverses the body of the 30S subunit contacting proteins on the other side and probably holding the rRNA structure together. The combined cluster of proteins S8, S12 and S17 appears to hold together the shoulder and platform of the 30S subunit. This chain is Small ribosomal subunit protein uS12, found in Chlorobium luteolum (strain DSM 273 / BCRC 81028 / 2530) (Pelodictyon luteolum).